A 467-amino-acid polypeptide reads, in one-letter code: MYDTLPPELWVQIVDYSGEISLLLTNTSFFELFNLINIKTDIIEYVMENDLIDILKYLSLLKKLGHPIIVDKNILNIKTLNKYLIKNCGENQLEIVKFLVSLGADIRAGNDYAVGLSSQNGHLEVVKYLVNQGSDIRAENDYAVRWASGNGHLEVVKYLVSQGANIRADNDHAIGLASYYGYLEVVKYLVSQGADIRSDNDYAVRMASRNGHIEVVEYLVSQGANIRSDNDYAVRLASQNGHLEVVKYLVSQGADIKSDNDYAVRLASQNGHLEVVEYLVTQGTNIRVNNNYAVEWASKNGNLEVVKYLISQGADIIADNNFAVRWASRNGHLEVVKYLVSLGADIKSDNDYAVRWASGNGHLEVVKYLVSQGSDIRVENDYAVRWASRNGHFDVIKYLVSQGADIRSDNDYAVKWASENGHLEVVKFLVSLGADIKAEDDYAVRWASEKGHLEVVEYLVSQGAVLS.

14 ANK repeats span residues 38-70, 79-108, 109-138, 140-168, 170-198, 199-228, 229-258, 260-288, 289-318, 320-348, 350-378, 379-408, 410-438, and 440-467; these read IKTD…PIIV, TLNK…DIRA, GNDY…DIRA, NDYA…NIRA, NDHA…DIRS, DNDY…NIRS, DNDY…DIKS, NDYA…NIRV, NNNY…DIIA, NNFA…DIKS, NDYA…DIRV, ENDY…DIRS, NDYA…DIKA, and DDYA…AVLS.

This chain is Putative ankyrin repeat protein R911, found in Acanthamoeba polyphaga mimivirus (APMV).